A 165-amino-acid polypeptide reads, in one-letter code: Coatomer subunit zeta (165 aa).

The protein belongs to the adaptor complexes small subunit family. In terms of assembly, oligomeric complex that consists of at least the alpha, beta, beta', gamma, delta, epsilon and zeta subunits.

Its subcellular location is the cytoplasm. It is found in the golgi apparatus membrane. The protein localises to the cytoplasmic vesicle. It localises to the COPI-coated vesicle membrane. The coatomer is a cytosolic protein complex that binds to dilysine motifs and reversibly associates with Golgi non-clathrin-coated vesicles, which further mediate biosynthetic protein transport from the ER, via the Golgi up to the trans Golgi network. Coatomer complex is required for budding from Golgi membranes, and is essential for the retrograde Golgi-to-ER transport of dilysine-tagged proteins. The zeta subunit may be involved in regulating the coat assembly and, hence, the rate of biosynthetic protein transport due to its association-dissociation properties with the coatomer complex. The chain is Coatomer subunit zeta from Encephalitozoon cuniculi (strain GB-M1) (Microsporidian parasite).